Consider the following 580-residue polypeptide: Laccase-6 (580 aa).

The N-terminal stretch at 1-22 (MSCSWMIPVFAILAFVASAAQA) is a signal peptide. Plastocyanin-like domains lie at 30–148 (NVAT…PRRA) and 158–317 (EEKT…YVDA). Residues N44 and N78 are each glycosylated (N-linked (GlcNAc...) asparagine). The Cu cation site is built by H82, H84, H127, and H129. N-linked (GlcNAc...) asparagine glycans are attached at residues N306, N335, N385, N397, and N462. The Plastocyanin-like 3 domain occupies 424–564 (DFPDQPPVAF…AMVFEVESGP (141 aa)). Residues H480, H483, H485, H543, C544, H545, and H549 each coordinate Cu cation.

It belongs to the multicopper oxidase family. The cofactor is Cu cation.

The protein resides in the secreted. It localises to the extracellular space. It is found in the apoplast. It catalyses the reaction 4 hydroquinone + O2 = 4 benzosemiquinone + 2 H2O. Lignin degradation and detoxification of lignin-derived products. The polypeptide is Laccase-6 (LAC6) (Oryza sativa subsp. japonica (Rice)).